An 86-amino-acid polypeptide reads, in one-letter code: Neurotoxin 3FTx-8a (86 aa).

Residues 1–21 (MKTLLLTLVVVTIVCLDLGYT) form the signal peptide. 5 cysteine pairs are disulfide-bonded: Cys-24/Cys-45, Cys-27/Cys-32, Cys-38/Cys-63, Cys-67/Cys-78, and Cys-79/Cys-84.

As to expression, expressed by the venom gland.

It is found in the secreted. Functionally, binds with low affinity to muscular (alpha-1-beta-1-delta-epsilon/CHRNA1-CHRNB1-CHRND-CHRNE) and very low affinity to neuronal (alpha-7/CHRNA7) nicotinic acetylcholine receptor (nAChR). The protein is Neurotoxin 3FTx-8a of Bungarus fasciatus (Banded krait).